The primary structure comprises 403 residues: Cytochrome P450-SU2 (403 aa).

The segment at 1–24 (MTTAERTAPPDALTVPASRAPGCP) is disordered. Cys-352 contacts heme.

This sequence belongs to the cytochrome P450 family. It depends on heme as a cofactor.

Metabolism of a number of sulfonylurea herbicides. The sequence is that of Cytochrome P450-SU2 (cyp105B1) from Streptomyces griseolus.